The sequence spans 118 residues: D-dopachrome decarboxylase (118 aa).

Pro-2 carries the N-acetylproline modification.

The protein belongs to the MIF family. Homotrimer.

The protein localises to the cytoplasm. The enzyme catalyses D-dopachrome + H(+) = 5,6-dihydroxyindole + CO2. Tautomerization of D-dopachrome with decarboxylation to give 5,6-dihydroxyindole (DHI). The polypeptide is D-dopachrome decarboxylase (ddt) (Xenopus tropicalis (Western clawed frog)).